A 270-amino-acid chain; its full sequence is uncharacterized protein (270 aa).

The first 22 residues, methionine 1–glycine 22, serve as a signal peptide directing secretion. Cysteine 23 carries N-palmitoyl cysteine lipidation. A lipid anchor (S-diacylglycerol cysteine) is attached at cysteine 23.

The protein belongs to the staphylococcal tandem lipoprotein family.

The protein localises to the cell membrane. This is an uncharacterized protein from Staphylococcus aureus (strain COL).